We begin with the raw amino-acid sequence, 864 residues long: Dynamin-1 (864 aa).

A Dynamin-type G domain is found at 28–294; the sequence is DLDLPQIAVV…LTNHIRDTLP (267 aa). Residues 38–45 are G1 motif; it reads GGQSAGKS. Residues S41, G43, K44, S45, S46, R59, and G60 each contribute to the GDP site. The G2 motif stretch occupies residues 64 to 66; sequence VTR. At Y80 the chain carries Phosphotyrosine. Position 125 is a 3'-nitrotyrosine; alternate (Y125). A Phosphotyrosine; alternate modification is found at Y125. The segment at 136–139 is G3 motif; sequence DLPG. The tract at residues 205–208 is G4 motif; sequence TKLD. GDP-binding residues include K206, D208, D211, N236, R237, and Q239. The tract at residues 235 to 238 is G5 motif; it reads VNRS. Phosphoserine is present on residues S306 and S347. Y354 is modified (phosphotyrosine). S512 bears the Phosphoserine mark. A PH domain is found at 519–625; that stretch reads LVIRKGWLTI…WKASFLRAGV (107 aa). The GED domain occupies 659-750; that stretch reads VETIRNLVDS…IIGDINTTTV (92 aa). The interval 767 to 864 is disordered; sequence SVPAGRRSPT…PESPRPPFDL (98 aa). S774 is modified (phosphoserine; by CDK5). Residue S778 is modified to Phosphoserine. R796 is subject to Omega-N-methylarginine. Phosphoserine is present on S822. Residues 825–843 show a composition bias toward pro residues; it reads PFGPPPQVPSRPNRAPPGV. Residues S851 and S857 each carry the phosphoserine modification.

This sequence belongs to the TRAFAC class dynamin-like GTPase superfamily. Dynamin/Fzo/YdjA family. Homodimer; homodimerization is mediated by the dynamin-type G domain which promotes assembly-stimulated GTPase activity. Homo-tetramer formed from two dimers in the absence of lipid. Oligomerizes into a helical polymer that self-assembles around the vesicle membrane, when associated to the menbrane through lipid binding. Interacts (via C-terminal proline-rich domain (PRD)) with SNX9 (via SH3 domain); this interaction allows regulation of DNM1 self-assembly during late stages of endocytic vesicle formation and supports DNM1's early functions in accelerating clathrin-coated pits (CCPs) maturation in non neuronals cell. Interacts (via C-terminal proline-rich domain (PRD)) with MYO1E (via SH3 domain); this interaction regulates receptor-mediated endocytosis. Interacts with SNX33 (via SH3 domain); this interaction decreases DNM1-dependent endocytosis. Interacts with DIAPH1. Interacts with GRB2 (via SH3 domain); this interaction mediates disassembly of DNM1 polymers, therefore modulates self-assembly. Forms a complex with BIN1 (via SH3 domain) and SH3GL2 (via SH3 domain). Forms a complex with SH3GL2 (via SH3 domain) and AMPH (via SH3 domain). Forms a complex with SH3GL2 (via SH3 domain) and SYNJ1. Interacts with AMPH. Interacts (via C-terminal proline-rich domain (PRD)) with SYT1; this interaction facilitates vesicle fission during clathrin-mediated endocytosis (CME). Interacts (via C-terminal proline-rich domain (PRD)) with PLCG1 (via SH3 domain); this interaction stimulates the release of GDP from DNM1 and enhances DNM1-dependent endocytosis. Interacts with SNPH; this interaction inhibits the binding of DNM1 to AMPH and DNM1-receptor-mediated endocytosis. Interacts with CAV1. Interacts with SH3GLB1 (via SH3 domain). Interacts with PACSIN1 (via SH3 domain), PACSIN2 (via SH3 domain) and PACSIN3 (via SH3 domain). Interacts with UNC119; this interaction decreases DNM1's GTPase activity and affects DNM1's interaction with AMPH. Interacts (GTP-bound form) with DNAJC6; this interaction allows clathrin-coated vesicle (CCV) formation at the plasma membrane. In terms of processing, phosphorylation at Ser-774 by GSK3B/GSK3-beta leads to inactivation of receptor-mediated endocytosis in non-neuronal cells. Dephosphorylation at Ser-774, through the EGFR downstream signaling, leads to activation and regulates early stages of clathrin-mediated endocytosis (CME). Phosphorylated by CDK5 leading to synaptic vesicle endocytosis (SVE) activation. In terms of tissue distribution, brain-specific (peripheral sensory neurons).

Its subcellular location is the cytoplasmic vesicle. The protein localises to the clathrin-coated vesicle. It is found in the golgi apparatus. The protein resides in the cell membrane. It localises to the membrane. Its subcellular location is the clathrin-coated pit. The protein localises to the presynapse. It is found in the secretory vesicle. The protein resides in the chromaffin granule. It catalyses the reaction GTP + H2O = GDP + phosphate + H(+). Functionally, catalyzes the hydrolysis of GTP and utilizes this energy to mediate vesicle scission and participates in many forms of endocytosis, such as clathrin-mediated endocytosis or synaptic vesicle endocytosis as well as rapid endocytosis (RE). Associates to the membrane, through lipid binding, and self-assembles into rings and stacks of interconnected rings through oligomerization to form a helical polymer around the vesicle membrane leading to constriction of invaginated coated pits around their necks. Self-assembly of the helical polymer induces membrane tubules narrowing until the polymer reaches a length sufficient to trigger GTP hydrolysis. Depending on the curvature imposed on the tubules, membrane detachment from the helical polymer upon GTP hydrolysis can cause spontaneous hemifission followed by complete fission. May play a role in regulating early stages of clathrin-mediated endocytosis in non-neuronal cells through its activation by dephosphorylation via the signaling downstream of EGFR. Controls vesicle size at a step before fission, during formation of membrane pits, at hippocampal synapses. Controls plastic adaptation of the synaptic vesicle recycling machinery to high levels of activity. Mediates rapid endocytosis (RE), a Ca(2+)-dependent and clathrin- and K(+)-independent process in chromaffin cells. Microtubule-associated force-producing protein involved in producing microtubule bundles and able to bind and hydrolyze GTP. Through its interaction with DNAJC6, acts during the early steps of clathrin-coated vesicle (CCV) formation. This chain is Dynamin-1 (Dnm1), found in Rattus norvegicus (Rat).